We begin with the raw amino-acid sequence, 185 residues long: MLPSAQAPSLLNPTDDFAALGNIAWLWMNSPMHRDWPVHLLARNTLAPIQLGQYILLRCNDVPVAYCSWALMDADTELSYVMAPSSLGGNAWNCGDRLWIIDWIAPFSRDDNRALRRALAERHPDSVGRSLRVRRGGDTARVKEYRGRALDAAAARAQLDRYHAELIAGLRASNGGYAPRGRGTA.

Residues H33 and D102 contribute to the active site.

Belongs to the RTX toxin acyltransferase family. As to quaternary structure, homodimer.

It localises to the cytoplasm. The enzyme catalyses hexadecanoyl-[ACP] + L-lysyl-[protein] = N(6)-hexadecanoyl-L-lysyl-[protein] + holo-[ACP] + H(+). The catalysed reaction is (9Z)-hexadecenoyl-[ACP] + L-lysyl-[protein] = N(6)-[(9Z)-hexadecenoyl]-L-lysyl-[protein] + holo-[ACP] + H(+). In terms of biological role, protein-lysine palmitoyltransferase that catalyzes palmitoylation of the protoxin (CyaA) at two internal lysine residues, thereby converting it to the active toxin. The protein is Protein-lysine palmitoyltransferase CyaC of Bordetella bronchiseptica (strain ATCC BAA-588 / NCTC 13252 / RB50) (Alcaligenes bronchisepticus).